The sequence spans 312 residues: Homoserine O-succinyltransferase (312 aa).

Cys142 functions as the Acyl-thioester intermediate in the catalytic mechanism. Positions 163 and 192 each coordinate substrate. The active-site Proton acceptor is His235. Glu237 is an active-site residue. Arg249 serves as a coordination point for substrate.

The protein belongs to the MetA family.

Its subcellular location is the cytoplasm. The catalysed reaction is L-homoserine + succinyl-CoA = O-succinyl-L-homoserine + CoA. It functions in the pathway amino-acid biosynthesis; L-methionine biosynthesis via de novo pathway; O-succinyl-L-homoserine from L-homoserine: step 1/1. In terms of biological role, transfers a succinyl group from succinyl-CoA to L-homoserine, forming succinyl-L-homoserine. The protein is Homoserine O-succinyltransferase of Aliivibrio salmonicida (strain LFI1238) (Vibrio salmonicida (strain LFI1238)).